Reading from the N-terminus, the 120-residue chain is Autophagy-related protein 8C (120 aa).

Residues 1–20 (MARSSFKLEHPLERRQAEAN) are disordered. Residue glycine 117 is the site of Phosphatidylethanolamine amidated glycine attachment. Positions 118–120 (LFV) are cleaved as a propeptide — removed in mature form.

This sequence belongs to the ATG8 family. As to quaternary structure, interacts with ATG4. In terms of processing, the C-terminal 3 residues are removed by ATG4 to expose Gly-117 at the C-terminus. The C-terminal Gly is then amidated with phosphatidylethanolamine by an activating system similar to that for ubiquitin.

It localises to the cytoplasmic vesicle. The protein resides in the autophagosome membrane. Its subcellular location is the vacuole membrane. The protein localises to the cytoplasm. It is found in the cytoskeleton. Ubiquitin-like modifier involved in autophagosomes formation. May mediate the delivery of the autophagosomes to the vacuole via the microtubule cytoskeleton. This chain is Autophagy-related protein 8C (ATG8C), found in Oryza sativa subsp. indica (Rice).